Consider the following 384-residue polypeptide: Queuine tRNA-ribosyltransferase (384 aa).

Aspartate 92 functions as the Proton acceptor in the catalytic mechanism. Substrate is bound by residues 92–96 (DSGGF), aspartate 146, glutamine 192, and glycine 219. Residues 250-256 (GVGTPAE) form an RNA binding region. The active-site Nucleophile is aspartate 269. The tract at residues 274-278 (TRNAR) is RNA binding; important for wobble base 34 recognition. Zn(2+) is bound by residues cysteine 307, cysteine 309, cysteine 312, and histidine 338.

The protein belongs to the queuine tRNA-ribosyltransferase family. In terms of assembly, homodimer. Within each dimer, one monomer is responsible for RNA recognition and catalysis, while the other monomer binds to the replacement base PreQ1. The cofactor is Zn(2+).

It catalyses the reaction 7-aminomethyl-7-carbaguanine + guanosine(34) in tRNA = 7-aminomethyl-7-carbaguanosine(34) in tRNA + guanine. It functions in the pathway tRNA modification; tRNA-queuosine biosynthesis. Functionally, catalyzes the base-exchange of a guanine (G) residue with the queuine precursor 7-aminomethyl-7-deazaguanine (PreQ1) at position 34 (anticodon wobble position) in tRNAs with GU(N) anticodons (tRNA-Asp, -Asn, -His and -Tyr). Catalysis occurs through a double-displacement mechanism. The nucleophile active site attacks the C1' of nucleotide 34 to detach the guanine base from the RNA, forming a covalent enzyme-RNA intermediate. The proton acceptor active site deprotonates the incoming PreQ1, allowing a nucleophilic attack on the C1' of the ribose to form the product. After dissociation, two additional enzymatic reactions on the tRNA convert PreQ1 to queuine (Q), resulting in the hypermodified nucleoside queuosine (7-(((4,5-cis-dihydroxy-2-cyclopenten-1-yl)amino)methyl)-7-deazaguanosine). This chain is Queuine tRNA-ribosyltransferase, found in Desulfosudis oleivorans (strain DSM 6200 / JCM 39069 / Hxd3) (Desulfococcus oleovorans).